The primary structure comprises 236 residues: Potassium/proton antiporter CemA (236 aa).

Helical transmembrane passes span 12–32 (TVTS…TNHV), 114–134 (IANV…LLLG), 161–181 (IILF…EILI), and 196–216 (FIFL…KYWI).

This sequence belongs to the CemA family.

The protein resides in the plastid. It is found in the chloroplast inner membrane. The catalysed reaction is K(+)(in) + H(+)(out) = K(+)(out) + H(+)(in). Functionally, contributes to K(+)/H(+) antiport activity by supporting proton efflux to control proton extrusion and homeostasis in chloroplasts in a light-dependent manner to modulate photosynthesis. Prevents excessive induction of non-photochemical quenching (NPQ) under continuous-light conditions. Indirectly promotes efficient inorganic carbon uptake into chloroplasts. This Chlorokybus atmophyticus (Soil alga) protein is Potassium/proton antiporter CemA.